Reading from the N-terminus, the 1254-residue chain is Receptor tyrosine-protein kinase erbB-2 (1254 aa).

The N-terminal stretch at 1–22 is a signal peptide; sequence MELAAWCGWGLLLALLSPGASG. Over 23–652 the chain is Extracellular; that stretch reads TQVCTGTDMK…PAEQRASPAT (630 aa). Cysteine 26 and cysteine 53 are oxidised to a cystine. N-linked (GlcNAc...) asparagine glycans are attached at residues asparagine 68, asparagine 125, and asparagine 187. Disulfide bonds link cysteine 162/cysteine 192, cysteine 195/cysteine 204, cysteine 199/cysteine 212, cysteine 236/cysteine 244, cysteine 240/cysteine 252, cysteine 255/cysteine 264, cysteine 268/cysteine 295, cysteine 299/cysteine 311, cysteine 315/cysteine 331, cysteine 334/cysteine 338, cysteine 342/cysteine 367, cysteine 475/cysteine 504, cysteine 511/cysteine 520, and cysteine 515/cysteine 528. Asparagine 259 carries an N-linked (GlcNAc...) asparagine glycan. Asparagine 530 carries N-linked (GlcNAc...) asparagine glycosylation. 8 disulfide bridges follow: cysteine 531–cysteine 540, cysteine 544–cysteine 560, cysteine 563–cysteine 576, cysteine 567–cysteine 584, cysteine 587–cysteine 596, cysteine 600–cysteine 623, cysteine 626–cysteine 634, and cysteine 630–cysteine 642. The N-linked (GlcNAc...) asparagine glycan is linked to asparagine 571. Asparagine 629 carries an N-linked (GlcNAc...) asparagine glycan. A helical transmembrane segment spans residues 653–675; it reads SIIATVVGILLFLVIGVVVGILI. The segment at 676-689 is required for interaction with KPNB1 and EEA1; it reads KRRRQKIRKYTMRR. The Nuclear localization signal motif lies at 676 to 689; the sequence is KRRRQKIRKYTMRR. Over 676–1254 the chain is Cytoplasmic; that stretch reads KRRRQKIRKY…PEYLGLDVPV (579 aa). Residues 720-987 enclose the Protein kinase domain; the sequence is LRKVKVLGSG…RMARDPQRFV (268 aa). Residues 726 to 734 and lysine 753 contribute to the ATP site; that span reads LGSGAFGTV. Aspartate 845 serves as the catalytic Proton acceptor. Tyrosine 877 carries the post-translational modification Phosphotyrosine. 2 disordered regions span residues 1029-1116 and 1133-1179; these read GFFF…SEDP and CSPQ…GKNG. Phosphoserine occurs at positions 1054, 1078, 1083, and 1107. At tyrosine 1112 the chain carries Phosphotyrosine. At tyrosine 1139 the chain carries Phosphotyrosine; by autocatalysis. Positions 1146–1161 are enriched in pro residues; it reads RPQPPLTPEGPLPPVR. Threonine 1166 carries the phosphothreonine modification. Residues 1195-1197 form an interaction with PIK3C2B region; that stretch reads EYL. The residue at position 1196 (tyrosine 1196) is a Phosphotyrosine. Positions 1223–1254 are disordered; that stretch reads DQDPSERGSPPNTFEGTPTAENPEYLGLDVPV. Over residues 1232 to 1242 the composition is skewed to polar residues; the sequence is PPNTFEGTPTA. The residue at position 1247 (tyrosine 1247) is a Phosphotyrosine; by autocatalysis.

Belongs to the protein kinase superfamily. Tyr protein kinase family. EGF receptor subfamily. In terms of assembly, homodimer. Heterodimer with EGFR, ERBB3 and ERBB4. Part of a complex with EGFR and either PIK3C2A or PIK3C2B. May interact with PIK3C2B when phosphorylated on Tyr-1196. Interacts with PRKCABP and PLXNB1. Interacts (when phosphorylated on Tyr-1247) with MEMO. Interacts with MUC1. Interacts (when phosphorylated on Tyr-1139) with GRB7 (via SH2 domain). Interacts (when phosphorylated on Tyr-1247) with ERBIN. Interacts with SRC, KPNB1, RANBP2, EEA1, CRM1, CLTC, PTK6, RPA194, MYOC and ACTB. Interacts (preferentially with the tyrosine phosphorylated form) with CPNE3; this interaction occurs at the cell membrane and is increased in a growth factor heregulin-dependent manner. Interacts with HSP90AA1 and HSP90AB1 in an ATP-dependent manner; the interaction suppresses ERBB2 kinase activity. Interacts with SORL1; this interaction regulates ERBB2 subcellular distribution by promoting its recycling after internalization from endosomes back to the plasma membrane, hence stimulates ERBB2-mediated signaling. Interacts with SH3BGRL. Interacts with ROR1. Autophosphorylated. Autophosphorylation occurs in trans, i.e. one subunit of the dimeric receptor phosphorylates tyrosine residues on the other subunit. Ligand-binding increases phosphorylation on tyrosine residues. Signaling via SEMA4C promotes phosphorylation at Tyr-1247. Dephosphorylated by PTPN12.

Its subcellular location is the cell membrane. The protein resides in the cell projection. It is found in the ruffle membrane. It localises to the early endosome. The protein localises to the cytoplasm. Its subcellular location is the perinuclear region. The protein resides in the nucleus. It carries out the reaction L-tyrosyl-[protein] + ATP = O-phospho-L-tyrosyl-[protein] + ADP + H(+). In terms of biological role, protein tyrosine kinase that is part of several cell surface receptor complexes, but that apparently needs a coreceptor for ligand binding. Essential component of a neuregulin-receptor complex, although neuregulins do not interact with it alone. GP30 is a potential ligand for this receptor. Regulates outgrowth and stabilization of peripheral microtubules (MTs). Upon ERBB2 activation, the MEMO1-RHOA-DIAPH1 signaling pathway elicits the phosphorylation and thus the inhibition of GSK3B at cell membrane. This prevents the phosphorylation of APC and CLASP2, allowing its association with the cell membrane. In turn, membrane-bound APC allows the localization of MACF1 to the cell membrane, which is required for microtubule capture and stabilization. In the nucleus is involved in transcriptional regulation. Associates with the 5'-TCAAATTC-3' sequence in the PTGS2/COX-2 promoter and activates its transcription. Implicated in transcriptional activation of CDKN1A; the function involves STAT3 and SRC. Involved in the transcription of rRNA genes by RNA Pol I and enhances protein synthesis and cell growth. This chain is Receptor tyrosine-protein kinase erbB-2 (ERBB2), found in Mesocricetus auratus (Golden hamster).